Reading from the N-terminus, the 905-residue chain is Transcription termination factor 1 (905 aa).

Basic and acidic residues-rich tracts occupy residues Met-1–Asp-16 and Ile-24–Ser-33. The tract at residues Met-1–Ser-33 is disordered. The N-terminal region (NRD) stretch occupies residues Met-1–Lys-223. Ser-65 carries the post-translational modification Phosphoserine. The segment at Ser-151 to Gln-443 is disordered. 2 stretches are compositionally biased toward basic residues: residues Val-163–Lys-174 and His-215–Ser-226. At Ser-240 the chain carries Phosphoserine. At Thr-248 the chain carries Phosphothreonine. Composition is skewed to basic residues over residues Thr-270 to Ser-283, Asn-330 to Ser-339, and Thr-385 to Arg-401. Position 403 is a phosphoserine (Ser-403). The span at Pro-410–Phe-419 shows a compositional bias: polar residues. Tyr-476 carries the phosphotyrosine modification. Ser-478, Ser-481, and Ser-487 each carry phosphoserine. A may be involved in interaction with ARF region spans residues Leu-498–Pro-886. Myb-like domains are found at residues Asp-612–Ser-661 and Ser-661–Leu-745. A Glycyl lysine isopeptide (Lys-Gly) (interchain with G-Cter in SUMO2) cross-link involves residue Lys-700. Ser-872 carries the post-translational modification Phosphoserine.

In terms of assembly, oligomer. The oligomeric structure enables to interact simultaneously with two separate DNA fragments. Interacts with BAZ2A/TIP5. Interacts with CAVIN1. Interacts (via the N-terminal region (NRD) and a C-terminal region) with CDKN2A/ARF; the interaction is direct. Interacts (via C-terminal region) with NPM1/B23.

The protein resides in the nucleus. It is found in the nucleolus. The protein localises to the nucleoplasm. Functionally, multifunctional nucleolar protein that terminates ribosomal gene transcription, mediates replication fork arrest and regulates RNA polymerase I transcription on chromatin. Plays a dual role in rDNA regulation, being involved in both activation and silencing of rDNA transcription. Interaction with BAZ2A/TIP5 recovers DNA-binding activity. The chain is Transcription termination factor 1 (TTF1) from Homo sapiens (Human).